A 1740-amino-acid chain; its full sequence is Vitamin B12-dependent ribonucleoside-diphosphate reductase (1740 aa).

The 93-residue stretch at 4-96 folds into the ATP-cone domain; that stretch reads EKVMKRDGRI…LYRKKKAEIR (93 aa). Substrate contacts are provided by residues Thr257, 272–273, and Gly301; that span reads AC. A disulfide bridge connects residues Cys273 and Cys1308. Residues 443–582 form the DOD-type homing endonuclease 1 domain; sequence LAGFIAGDGC…VTHYLNALGI (140 aa). The Proton acceptor role is filled by Asn913. 913–914 contacts substrate; the sequence is NP. One can recognise a DOD-type homing endonuclease 2 domain in the interval 1063–1194; it reads VLGWFIGDGY…VQDLLLLFGI (132 aa). Cys1297 (cysteine radical intermediate) is an active-site residue. Residues 1297–1299 and 1471–1475 contribute to the substrate site; these read CGE and PTGSV. The active-site Proton acceptor is Glu1299.

Belongs to the ribonucleoside diphosphate reductase class-2 family. It depends on adenosylcob(III)alamin as a cofactor. In terms of processing, this protein undergoes a protein self splicing that involves a post-translational excision of the intervening region (intein) followed by peptide ligation.

The enzyme catalyses a 2'-deoxyribonucleoside 5'-diphosphate + [thioredoxin]-disulfide + H2O = a ribonucleoside 5'-diphosphate + [thioredoxin]-dithiol. Functionally, provides the precursors necessary for DNA synthesis. Catalyzes the biosynthesis of deoxyribonucleotides from the corresponding ribonucleotides. In Pyrococcus furiosus (strain ATCC 43587 / DSM 3638 / JCM 8422 / Vc1), this protein is Vitamin B12-dependent ribonucleoside-diphosphate reductase (rnr).